Consider the following 295-residue polypeptide: Probable aspartoacylase (295 aa).

Positions 16 and 19 each coordinate Zn(2+). Residues Arg-58 and 65–66 (NR) each bind substrate. A Zn(2+)-binding site is contributed by His-107. The substrate site is built by Glu-166 and Tyr-277.

The protein belongs to the AspA/AstE family. Aspartoacylase subfamily. Requires Zn(2+) as cofactor.

The enzyme catalyses an N-acyl-L-aspartate + H2O = a carboxylate + L-aspartate. The sequence is that of Probable aspartoacylase from Acaryochloris marina (strain MBIC 11017).